The primary structure comprises 213 residues: Pyridoxine/pyridoxamine 5'-phosphate oxidase (213 aa).

Residues 9–12 (RLEY) and Lys-67 each bind substrate. FMN-binding positions include 62 to 67 (RIVLLK), 77 to 78 (YT), Arg-83, Lys-84, and Gln-106. Positions 124, 128, and 132 each coordinate substrate. Residues 141-142 (QS) and Trp-185 contribute to the FMN site. Substrate is bound at residue 191 to 193 (RLH). Arg-195 lines the FMN pocket.

This sequence belongs to the pyridoxamine 5'-phosphate oxidase family. In terms of assembly, homodimer. Requires FMN as cofactor.

The enzyme catalyses pyridoxamine 5'-phosphate + O2 + H2O = pyridoxal 5'-phosphate + H2O2 + NH4(+). It carries out the reaction pyridoxine 5'-phosphate + O2 = pyridoxal 5'-phosphate + H2O2. It participates in cofactor metabolism; pyridoxal 5'-phosphate salvage; pyridoxal 5'-phosphate from pyridoxamine 5'-phosphate: step 1/1. Its pathway is cofactor metabolism; pyridoxal 5'-phosphate salvage; pyridoxal 5'-phosphate from pyridoxine 5'-phosphate: step 1/1. Functionally, catalyzes the oxidation of either pyridoxine 5'-phosphate (PNP) or pyridoxamine 5'-phosphate (PMP) into pyridoxal 5'-phosphate (PLP). The protein is Pyridoxine/pyridoxamine 5'-phosphate oxidase of Chromobacterium violaceum (strain ATCC 12472 / DSM 30191 / JCM 1249 / CCUG 213 / NBRC 12614 / NCIMB 9131 / NCTC 9757 / MK).